The sequence spans 692 residues: Elongation factor G (692 aa).

The 275-residue stretch at 8–282 (ERTRNIGIMA…AIVYYLPSPV (275 aa)) folds into the tr-type G domain. Residues 17-24 (AHIDAGKT), 81-85 (DTPGH), and 135-138 (NKMD) each bind GTP.

This sequence belongs to the TRAFAC class translation factor GTPase superfamily. Classic translation factor GTPase family. EF-G/EF-2 subfamily.

It localises to the cytoplasm. Functionally, catalyzes the GTP-dependent ribosomal translocation step during translation elongation. During this step, the ribosome changes from the pre-translocational (PRE) to the post-translocational (POST) state as the newly formed A-site-bound peptidyl-tRNA and P-site-bound deacylated tRNA move to the P and E sites, respectively. Catalyzes the coordinated movement of the two tRNA molecules, the mRNA and conformational changes in the ribosome. The chain is Elongation factor G from Carboxydothermus hydrogenoformans (strain ATCC BAA-161 / DSM 6008 / Z-2901).